Here is a 254-residue protein sequence, read N- to C-terminus: UstYa family oxidase phomYc' (254 aa).

Residues 38-58 (LVLVLQSVLIISLLASLHILG) form a helical membrane-spanning segment. The N-linked (GlcNAc...) asparagine glycan is linked to Asn-64. The HXXHC 1 motif lies at 138–142 (HQLHC). A glycan (N-linked (GlcNAc...) asparagine) is linked at Asn-159. The HXXHC 2 signature appears at 173–177 (HIDHC).

Belongs to the ustYa family.

Its subcellular location is the membrane. It functions in the pathway mycotoxin biosynthesis. Its function is as follows. UstYa family oxidase; part of the gene cluster that mediates the biosynthesis of the phomopsins, a group of hexapeptide mycotoxins which infects lupins and causes lupinosis disease in livestock. Within the pathway, phomYc' catalyzes the desaturation of the Ile moiety into 2,3-dehydroisoleucine (dIle). The pathway starts with the processing of the precursor phomA' by several endopeptidases including kexin proteases as well as the cluster-specific S41 family peptidase phomP1 and the oligopeptidase phomG' to produce 10 identical copies of the hexapeptide Tyr-Val-Ile-Pro-Ile-Asp. After being excised from the precursor peptide, the core peptides are cyclized and modified post-translationally by enzymes encoded within the gene cluster. The timing and order of proteolysis of the phomA' precursor and PTMs are still unknown. Two tyrosinase-like enzymes, phomQ1' and phomQ2, catalyze the chlorination and hydroxylation of Tyr, respectively. PhomYb, is proposed to be involved in the construction of the macrocyclic structure. The other 4 ustYa family proteins may be involved in PTMs that generate the unique structure of phomopsin A. PhomYa' is required for the hydroxylation of C-beta of Tyr. PhomYc', phomYd', and phomYe are responsible for the biosynthesis of 2,3-dehydroisoleucine (dIle), 2,3-dehydroaspartic acid (dAsp), and 3,4-dehydroproline (dPro), respectively. While dIle formation by phomYc' is indispensable for the installation of dAsp by phomYd', the order of the other PTMs have not been elucidated yet. Most of the biosynthetic enzymes likely have broad substrate specificity, and thus, there might be a metabolic grid from a precursor to phomopsin A. The enzyme(s) responsible for the biosynthesis of 3,4-dehydrovaline (dVal) have also not been identified yet. Finally, phomM' acts as an S-adenosylmethionine-dependent alpha-N-methyltransferase that catalyzes two successive N-methylation reactions, converting N-desmethyl-phomopsin A to phomopsin A and phomopsin A further to an N,N-dimethylated congener called phomopsin E. This is UstYa family oxidase phomYc' from Diaporthe leptostromiformis (Lupinosis disease fungus).